Reading from the N-terminus, the 232-residue chain is Large ribosomal subunit protein uL1 (232 aa).

Belongs to the universal ribosomal protein uL1 family. Part of the 50S ribosomal subunit.

Functionally, binds directly to 23S rRNA. The L1 stalk is quite mobile in the ribosome, and is involved in E site tRNA release. In terms of biological role, protein L1 is also a translational repressor protein, it controls the translation of the L11 operon by binding to its mRNA. The chain is Large ribosomal subunit protein uL1 from Chlamydia abortus (strain DSM 27085 / S26/3) (Chlamydophila abortus).